Reading from the N-terminus, the 200-residue chain is HVA22-like protein k (200 aa).

The disordered stretch occupies residues 176–200 (LGEIANGSPVSETNSDSESDSNHED).

The protein belongs to the DP1 family.

The chain is HVA22-like protein k (HVA22K) from Arabidopsis thaliana (Mouse-ear cress).